Reading from the N-terminus, the 196-residue chain is Pyridoxine/pyridoxamine 5'-phosphate oxidase (196 aa).

Lysine 49 serves as a coordination point for substrate. The FMN site is built by lysine 66 and glutamine 88. 3 residues coordinate substrate: tyrosine 106, arginine 110, and serine 114. Residues 123 to 124 and tryptophan 168 each bind FMN; that span reads QS. 174–176 provides a ligand contact to substrate; the sequence is RLH. Arginine 178 serves as a coordination point for FMN.

Belongs to the pyridoxamine 5'-phosphate oxidase family. As to quaternary structure, homodimer. Requires FMN as cofactor.

The enzyme catalyses pyridoxamine 5'-phosphate + O2 + H2O = pyridoxal 5'-phosphate + H2O2 + NH4(+). The catalysed reaction is pyridoxine 5'-phosphate + O2 = pyridoxal 5'-phosphate + H2O2. Its pathway is cofactor metabolism; pyridoxal 5'-phosphate salvage; pyridoxal 5'-phosphate from pyridoxamine 5'-phosphate: step 1/1. It functions in the pathway cofactor metabolism; pyridoxal 5'-phosphate salvage; pyridoxal 5'-phosphate from pyridoxine 5'-phosphate: step 1/1. In terms of biological role, catalyzes the oxidation of either pyridoxine 5'-phosphate (PNP) or pyridoxamine 5'-phosphate (PMP) into pyridoxal 5'-phosphate (PLP). This chain is Pyridoxine/pyridoxamine 5'-phosphate oxidase, found in Bdellovibrio bacteriovorus (strain ATCC 15356 / DSM 50701 / NCIMB 9529 / HD100).